We begin with the raw amino-acid sequence, 124 residues long: NADPH-dependent 7-cyano-7-deazaguanine reductase (124 aa).

Catalysis depends on Cys40, which acts as the Thioimide intermediate. Catalysis depends on Asp47, which acts as the Proton donor. Residues 62–64 and 81–82 each bind substrate; these read VEL and HE.

Belongs to the GTP cyclohydrolase I family. QueF type 1 subfamily.

It localises to the cytoplasm. It catalyses the reaction 7-aminomethyl-7-carbaguanine + 2 NADP(+) = 7-cyano-7-deazaguanine + 2 NADPH + 3 H(+). It functions in the pathway tRNA modification; tRNA-queuosine biosynthesis. Functionally, catalyzes the NADPH-dependent reduction of 7-cyano-7-deazaguanine (preQ0) to 7-aminomethyl-7-deazaguanine (preQ1). This chain is NADPH-dependent 7-cyano-7-deazaguanine reductase, found in Wolinella succinogenes (strain ATCC 29543 / DSM 1740 / CCUG 13145 / JCM 31913 / LMG 7466 / NCTC 11488 / FDC 602W) (Vibrio succinogenes).